We begin with the raw amino-acid sequence, 186 residues long: Ribonuclease HII (186 aa).

An RNase H type-2 domain is found at 2-186 (KILAGVDEVG…KTFSPISDLL (185 aa)). The a divalent metal cation site is built by D8, E9, and D99.

Belongs to the RNase HII family. The cofactor is Mn(2+). Mg(2+) serves as cofactor.

It is found in the cytoplasm. The catalysed reaction is Endonucleolytic cleavage to 5'-phosphomonoester.. In terms of biological role, endonuclease that specifically degrades the RNA of RNA-DNA hybrids. This is Ribonuclease HII from Pelagibacter ubique (strain HTCC1062).